A 450-amino-acid polypeptide reads, in one-letter code: Glucose-6-phosphate isomerase (450 aa).

The Proton donor role is filled by glutamate 291. Catalysis depends on residues histidine 312 and lysine 426.

Belongs to the GPI family.

Its subcellular location is the cytoplasm. It carries out the reaction alpha-D-glucose 6-phosphate = beta-D-fructose 6-phosphate. It participates in carbohydrate biosynthesis; gluconeogenesis. Its pathway is carbohydrate degradation; glycolysis; D-glyceraldehyde 3-phosphate and glycerone phosphate from D-glucose: step 2/4. Its function is as follows. Catalyzes the reversible isomerization of glucose-6-phosphate to fructose-6-phosphate. The protein is Glucose-6-phosphate isomerase of Clostridium novyi (strain NT).